A 474-amino-acid chain; its full sequence is MKTKCICELCSCGRHHCPHLPTKIYDKTEKPCLLSEYTENYPFYHSYLPRESFKPRREYQKGPIPMEGLTTSRRDFGPHKVAPVKVHQYDQFVPSEENMDLLTTYKKDYNPYPVCRVDPIKPRDSKYPCSDKMECLPTYKADYLPWNQPRREPLRLEHKYQPASVRFDNRTTHQDDYPIKGLVKTISCKPLAMPKLCNIPLEDVTNYKMSYVAHPVEKRFVHEAEKFRPCEIPFESLTTQKQSYRGLMGEPAKSLKPLARPPGLDMPFCNTTEFRDKYQAWPMPRMFSKAPITYVPPEDRMDLLTTVQAHYTCPKGAPAQSCRPALQIKKCGRFEGSSTTKDDYKQWSSMRTEPVKPVPQLDLPTEPLDCLTTTRAHYVPHLPINTKSCKPHWSGPRGNVPVESQTTYTISFTPKEMGRCLASYPEPPGYTFEEVDALGHRIYKPVSQAGSQQSSHLSVDDSENPNQRELEVLA.

Mn regions lie at residues 30-64, 65-97, 98-131, 132-165, 166-199, 200-232, 233-266, 267-299, 300-332, 333-366, 367-400, and 401-434; these read KPCLLSEYTENYPFYHSYLPRESFKPRREYQKGPI, PMEGLTTSRRDFGPHKVAPVKVHQYDQFVPSEE, NMDLLTTYKKDYNPYPVCRVDPIKPRDSKYPCSD, KMECLPTYKADYLPWNQPRREPLRLEHKYQPASV, RFDNRTTHQDDYPIKGLVKTISCKPLAMPKLCNI, PLEDVTNYKMSYVAHPVEKRFVHEAEKFRPCEI, PFESLTTQKQSYRGLMGEPAKSLKPLARPPGLDM, PFCNTTEFRDKYQAWPMPRMFSKAPITYVPPED, RMDLLTTVQAHYTCPKGAPAQSCRPALQIKKCG, RFEGSSTTKDDYKQWSSMRTEPVKPVPQLDLPTE, PLDCLTTTRAHYVPHLPINTKSCKPHWSGPRGNV, and PVESQTTYTISFTPKEMGRCLASYPEPPGYTFEE. Residues 446–474 form a disordered region; sequence VSQAGSQQSSHLSVDDSENPNQRELEVLA. Over residues 448–457 the composition is skewed to polar residues; it reads QAGSQQSSHL.

It belongs to the FAM154 family. As to quaternary structure, associates with microtubules via the Mn regions. As to expression, widely expressed, with highest levels in testis. Expressed in mature spermatozoa (at protein level).

It localises to the cytoplasm. The protein localises to the cytoskeleton. Its subcellular location is the microtubule organizing center. It is found in the centrosome. The protein resides in the centriole. It localises to the cilium basal body. The protein localises to the cilium axoneme. Its subcellular location is the flagellum axoneme. In terms of biological role, may play a role in the regulation of cilium length. Stabilizes microtubules at low temperature. The protein is Stabilizer of axonemal microtubules 1 (SAXO1) of Homo sapiens (Human).